Reading from the N-terminus, the 308-residue chain is D-alanine--D-alanine ligase (308 aa).

The 198-residue stretch at 105–302 (KAIFRSLGLA…FPDLCDRILD (198 aa)) folds into the ATP-grasp domain. 133-188 (DLPFGLPCVVKPAGEGSSVGVHLVNAAAELGPACRDAAGYAGDVIVERYVKGTEVD) serves as a coordination point for ATP. Mg(2+) contacts are provided by aspartate 256, glutamate 269, and asparagine 271.

The protein belongs to the D-alanine--D-alanine ligase family. The cofactor is Mg(2+). Mn(2+) is required as a cofactor.

The protein localises to the cytoplasm. It carries out the reaction 2 D-alanine + ATP = D-alanyl-D-alanine + ADP + phosphate + H(+). It participates in cell wall biogenesis; peptidoglycan biosynthesis. Functionally, cell wall formation. The protein is D-alanine--D-alanine ligase of Anaeromyxobacter dehalogenans (strain 2CP-C).